The primary structure comprises 297 residues: Pyridoxal 5'-phosphate synthase subunit PdxS (297 aa).

D-ribose 5-phosphate is bound at residue aspartate 27. Catalysis depends on lysine 84, which acts as the Schiff-base intermediate with D-ribose 5-phosphate. Glycine 156 is a binding site for D-ribose 5-phosphate. Arginine 168 is a binding site for D-glyceraldehyde 3-phosphate. D-ribose 5-phosphate contacts are provided by residues glycine 217 and 238–239; that span reads GS.

The protein belongs to the PdxS/SNZ family. As to quaternary structure, in the presence of PdxT, forms a dodecamer of heterodimers.

The enzyme catalyses aldehydo-D-ribose 5-phosphate + D-glyceraldehyde 3-phosphate + L-glutamine = pyridoxal 5'-phosphate + L-glutamate + phosphate + 3 H2O + H(+). Its pathway is cofactor biosynthesis; pyridoxal 5'-phosphate biosynthesis. Functionally, catalyzes the formation of pyridoxal 5'-phosphate from ribose 5-phosphate (RBP), glyceraldehyde 3-phosphate (G3P) and ammonia. The ammonia is provided by the PdxT subunit. Can also use ribulose 5-phosphate and dihydroxyacetone phosphate as substrates, resulting from enzyme-catalyzed isomerization of RBP and G3P, respectively. The sequence is that of Pyridoxal 5'-phosphate synthase subunit PdxS from Corynebacterium efficiens (strain DSM 44549 / YS-314 / AJ 12310 / JCM 11189 / NBRC 100395).